The chain runs to 181 residues: Protein GrpE (181 aa).

Over residues 1–10 (MENTQENPAT) the composition is skewed to polar residues. Positions 1 to 33 (MENTQENPATPSAEDIGSEKQAAQGAAPAAEAA) are disordered. Over residues 21 to 33 (QAAQGAAPAAEAA) the composition is skewed to low complexity.

This sequence belongs to the GrpE family. Homodimer.

It is found in the cytoplasm. In terms of biological role, participates actively in the response to hyperosmotic and heat shock by preventing the aggregation of stress-denatured proteins, in association with DnaK and GrpE. It is the nucleotide exchange factor for DnaK and may function as a thermosensor. Unfolded proteins bind initially to DnaJ; upon interaction with the DnaJ-bound protein, DnaK hydrolyzes its bound ATP, resulting in the formation of a stable complex. GrpE releases ADP from DnaK; ATP binding to DnaK triggers the release of the substrate protein, thus completing the reaction cycle. Several rounds of ATP-dependent interactions between DnaJ, DnaK and GrpE are required for fully efficient folding. This Burkholderia cenocepacia (strain ATCC BAA-245 / DSM 16553 / LMG 16656 / NCTC 13227 / J2315 / CF5610) (Burkholderia cepacia (strain J2315)) protein is Protein GrpE.